The chain runs to 502 residues: 4,4'-diapophytoene desaturase (4,4'-diaponeurosporene-forming) (502 aa).

5 to 17 lines the FAD pocket; it reads VIGAGVTGLAAAA.

It belongs to the carotenoid/retinoid oxidoreductase family. CrtN subfamily.

The enzyme catalyses 15-cis-4,4'-diapophytoene + 3 FAD + 3 H(+) = all-trans-4,4'-diaponeurosporene + 3 FADH2. The protein operates within carotenoid biosynthesis; staphyloxanthin biosynthesis; staphyloxanthin from farnesyl diphosphate: step 2/5. Involved in the biosynthesis of the yellow-orange carotenoid staphyloxanthin, which plays a role in the virulence via its protective function against oxidative stress. Catalyzes three successive dehydrogenation reactions that lead to the introduction of three double bonds into 4,4'-diapophytoene (dehydrosqualene), with 4,4'-diapophytofluene and 4,4'-diapo-zeta-carotene as intermediates, and 4,4'-diaponeurosporene (the major deep-yellow pigment in staphylococci strains) as the end product. This is 4,4'-diapophytoene desaturase (4,4'-diaponeurosporene-forming) from Staphylococcus aureus (strain MRSA252).